The chain runs to 161 residues: Transcriptional repressor NrdR (161 aa).

A zinc finger spans residues 3 to 34 (CPSCQHTDSRVLESRAADSGKSVRRRRECLNC). Residues 49-139 (ITVVKRSGTR…VYGKFSGISD (91 aa)) form the ATP-cone domain.

It belongs to the NrdR family. The cofactor is Zn(2+).

Negatively regulates transcription of bacterial ribonucleotide reductase nrd genes and operons by binding to NrdR-boxes. The chain is Transcriptional repressor NrdR from Synechococcus sp. (strain RCC307).